The primary structure comprises 1016 residues: UvrABC system protein A (1016 aa).

32-39 (GVSGSGKS) contributes to the ATP binding site. The C4-type zinc-finger motif lies at 259–286 (CPEHGSVLEELEPRSFSFNSPYGACGDC). ABC transporter domains lie at 315–627 (WTKK…KNSL) and 647–975 (GNGK…EYLR). 679–686 (GPSGSGKS) serves as a coordination point for ATP. A C4-type zinc finger spans residues 778-804 (CEHCKGDGVMKIEMNFLPDIYVPCEVC). Residues 984–1016 (EPRARGEKAEKPAKAKAPAKKRTKKQTELVEAD) form a disordered region. Residues 985 to 996 (PRARGEKAEKPA) are compositionally biased toward basic and acidic residues.

The protein belongs to the ABC transporter superfamily. UvrA family. Forms a heterotetramer with UvrB during the search for lesions.

It is found in the cytoplasm. Functionally, the UvrABC repair system catalyzes the recognition and processing of DNA lesions. UvrA is an ATPase and a DNA-binding protein. A damage recognition complex composed of 2 UvrA and 2 UvrB subunits scans DNA for abnormalities. When the presence of a lesion has been verified by UvrB, the UvrA molecules dissociate. The protein is UvrABC system protein A of Deinococcus radiodurans (strain ATCC 13939 / DSM 20539 / JCM 16871 / CCUG 27074 / LMG 4051 / NBRC 15346 / NCIMB 9279 / VKM B-1422 / R1).